We begin with the raw amino-acid sequence, 180 residues long: Large ribosomal subunit protein uL5 (180 aa).

The protein belongs to the universal ribosomal protein uL5 family. In terms of assembly, part of the 50S ribosomal subunit; part of the 5S rRNA/L5/L18/L25 subcomplex. Contacts the 5S rRNA and the P site tRNA. Forms a bridge to the 30S subunit in the 70S ribosome.

Functionally, this is one of the proteins that bind and probably mediate the attachment of the 5S RNA into the large ribosomal subunit, where it forms part of the central protuberance. In the 70S ribosome it contacts protein S13 of the 30S subunit (bridge B1b), connecting the 2 subunits; this bridge is implicated in subunit movement. Contacts the P site tRNA; the 5S rRNA and some of its associated proteins might help stabilize positioning of ribosome-bound tRNAs. This Chloroflexus aggregans (strain MD-66 / DSM 9485) protein is Large ribosomal subunit protein uL5.